A 295-amino-acid chain; its full sequence is Pyridoxal 5'-phosphate synthase subunit PdxS (295 aa).

Aspartate 25 is a D-ribose 5-phosphate binding site. Lysine 82 functions as the Schiff-base intermediate with D-ribose 5-phosphate in the catalytic mechanism. Glycine 154 provides a ligand contact to D-ribose 5-phosphate. Residue arginine 166 participates in D-glyceraldehyde 3-phosphate binding. D-ribose 5-phosphate-binding positions include glycine 215 and 236–237 (GS).

Belongs to the PdxS/SNZ family. In the presence of PdxT, forms a dodecamer of heterodimers.

It catalyses the reaction aldehydo-D-ribose 5-phosphate + D-glyceraldehyde 3-phosphate + L-glutamine = pyridoxal 5'-phosphate + L-glutamate + phosphate + 3 H2O + H(+). It participates in cofactor biosynthesis; pyridoxal 5'-phosphate biosynthesis. Its function is as follows. Catalyzes the formation of pyridoxal 5'-phosphate from ribose 5-phosphate (RBP), glyceraldehyde 3-phosphate (G3P) and ammonia. The ammonia is provided by the PdxT subunit. Can also use ribulose 5-phosphate and dihydroxyacetone phosphate as substrates, resulting from enzyme-catalyzed isomerization of RBP and G3P, respectively. This Staphylococcus aureus (strain Mu3 / ATCC 700698) protein is Pyridoxal 5'-phosphate synthase subunit PdxS.